Consider the following 208-residue polypeptide: Transmembrane protein 222 (208 aa).

The interval 1–26 is disordered; sequence MAEAEGSSLLLLPPPPPPPRMAEVEA. At 1-55 the chain is on the extracellular side; sequence MAEAEGSSLLLLPPPPPPPRMAEVEAPTAAETDMKQYQGSGGVAMDVERSRFPYC. A helical transmembrane segment spans residues 56–76; it reads VVWTPIPVLTWFFPIIGHMGI. Residues 77–164 lie on the Cytoplasmic side of the membrane; the sequence is CTSTGVIRDF…MRYNNSTNWN (88 aa). Residues 165–185 traverse the membrane as a helical segment; it reads MVTLCFFCLLYGKYVSVGAFV. Residue K186 is a topological domain, extracellular. The chain crosses the membrane as a helical span at residues 187 to 207; it reads TWLPFILLLGIILTVSLVFNL. Position 208 (R208) is a topological domain, cytoplasmic.

In terms of tissue distribution, widely expressed. The highest expression is observed in the brain.

The protein resides in the membrane. It localises to the cell projection. It is found in the dendrite. This chain is Transmembrane protein 222 (TMEM222), found in Homo sapiens (Human).